The sequence spans 338 residues: Glycerol-3-phosphate dehydrogenase [NAD(P)+] (338 aa).

Residues S13, W14, and K108 each contribute to the NADPH site. 3 residues coordinate sn-glycerol 3-phosphate: K108, G139, and S141. A143 is an NADPH binding site. K194, D247, S257, R258, and N259 together coordinate sn-glycerol 3-phosphate. Catalysis depends on K194, which acts as the Proton acceptor. Position 258 (R258) interacts with NADPH. NADPH is bound by residues V282 and E284.

The protein belongs to the NAD-dependent glycerol-3-phosphate dehydrogenase family.

The protein localises to the cytoplasm. The catalysed reaction is sn-glycerol 3-phosphate + NAD(+) = dihydroxyacetone phosphate + NADH + H(+). The enzyme catalyses sn-glycerol 3-phosphate + NADP(+) = dihydroxyacetone phosphate + NADPH + H(+). Its pathway is membrane lipid metabolism; glycerophospholipid metabolism. In terms of biological role, catalyzes the reduction of the glycolytic intermediate dihydroxyacetone phosphate (DHAP) to sn-glycerol 3-phosphate (G3P), the key precursor for phospholipid synthesis. This chain is Glycerol-3-phosphate dehydrogenase [NAD(P)+], found in Streptococcus pneumoniae (strain CGSP14).